The sequence spans 347 residues: Quinolinate synthase (347 aa).

Iminosuccinate is bound by residues H47 and S68. Residue C113 coordinates [4Fe-4S] cluster. Iminosuccinate contacts are provided by residues 139–141 (YAN) and S156. C200 provides a ligand contact to [4Fe-4S] cluster. Iminosuccinate is bound by residues 226 to 228 (HPE) and T243. A [4Fe-4S] cluster-binding site is contributed by C297.

This sequence belongs to the quinolinate synthase family. Type 1 subfamily. It depends on [4Fe-4S] cluster as a cofactor.

It localises to the cytoplasm. The catalysed reaction is iminosuccinate + dihydroxyacetone phosphate = quinolinate + phosphate + 2 H2O + H(+). The protein operates within cofactor biosynthesis; NAD(+) biosynthesis; quinolinate from iminoaspartate: step 1/1. Catalyzes the condensation of iminoaspartate with dihydroxyacetone phosphate to form quinolinate. The sequence is that of Quinolinate synthase from Shigella flexneri.